Consider the following 546-residue polypeptide: Hydroxylamine reductase (546 aa).

[4Fe-4S] cluster is bound by residues C3, C6, C18, and C25. Hybrid [4Fe-2O-2S] cluster is bound by residues H245, E269, C313, C401, C429, C454, E488, and K490. Residue C401 is modified to Cysteine persulfide.

This sequence belongs to the HCP family. [4Fe-4S] cluster serves as cofactor. It depends on hybrid [4Fe-2O-2S] cluster as a cofactor.

It localises to the cytoplasm. It catalyses the reaction A + NH4(+) + H2O = hydroxylamine + AH2 + H(+). With respect to regulation, inhibited by cyanide and by sulfide and iron reagents such as dithioerythritol, 2,2'-dipyridyl and o-phenanthroline. Its function is as follows. Could be involved in assimilation and/or detoxification of hydroxylamine, which is a toxic compound that may be formed during nitrate/nitrite assimilation. Catalyzes the reduction of hydroxylamine to form NH(3) and H(2)O. It has a low reductase activity with FAD, FMN, benzyl viologen and bromphenol blue as electrons donors, but it is not able to use NAD or NADP. This chain is Hydroxylamine reductase, found in Rhodobacter capsulatus (Rhodopseudomonas capsulata).